Here is a 388-residue protein sequence, read N- to C-terminus: Chorismate synthase (388 aa).

NADP(+) is bound by residues R39 and R45. The disordered stretch occupies residues 95-118 (EKNEKSRRVSRPRPGHADLVGGMK). FMN-binding positions include 130–132 (RSS), 251–252 (NA), G296, 311–315 (KPIPT), and R337.

It belongs to the chorismate synthase family. Homotetramer. FMNH2 is required as a cofactor.

It carries out the reaction 5-O-(1-carboxyvinyl)-3-phosphoshikimate = chorismate + phosphate. The protein operates within metabolic intermediate biosynthesis; chorismate biosynthesis; chorismate from D-erythrose 4-phosphate and phosphoenolpyruvate: step 7/7. Its function is as follows. Catalyzes the anti-1,4-elimination of the C-3 phosphate and the C-6 proR hydrogen from 5-enolpyruvylshikimate-3-phosphate (EPSP) to yield chorismate, which is the branch point compound that serves as the starting substrate for the three terminal pathways of aromatic amino acid biosynthesis. This reaction introduces a second double bond into the aromatic ring system. This Listeria monocytogenes serovar 1/2a (strain ATCC BAA-679 / EGD-e) protein is Chorismate synthase.